Consider the following 264-residue polypeptide: Propanediol uptake facilitator PduF (264 aa).

2 helical membrane passes run 10 to 30 and 42 to 62; these read GAEFLGTGLFLFFGIGCLSAL and ICIIWGLGISLAVYLTAGISG. An NPA 1 motif is present at residues 66-68; that stretch reads NPA. The next 3 membrane-spanning stretches (helical) occupy residues 84–104, 143–163, and 179–199; these read VLPYIIAQFAGAFGGALLAYV, VWQAALVEVVITSILMGMIMA, and LLIGILVAVIGASTGPLTGFA. The NPA 2 motif lies at 201–203; that stretch reads NPA. The helical transmembrane segment at 228–248 threads the bilayer; it reads IPYFIVPIVAPVIGACAGAAI.

It belongs to the MIP/aquaporin (TC 1.A.8) family.

It localises to the cell inner membrane. Probably facilitates diffusion of 1,2-propanediol (1,2-PD) into the cell. Modeling suggests active transport of 1,2-PD is required at low extracellular concentrations to allow maximal growth and saturation of PduP/PduQ within the bacterial microcompartment (BMC); this protein may be the cellular transporter. Functionally, the 1,2-PD-specific bacterial microcompartment (BMC) concentrates low levels of 1,2-PD catabolic enzymes, concentrates volatile reaction intermediates thus enhancing pathway flux and keeps the level of toxic, mutagenic propionaldehyde low. This is Propanediol uptake facilitator PduF from Salmonella typhimurium (strain LT2 / SGSC1412 / ATCC 700720).